A 347-amino-acid chain; its full sequence is Transcription factor EC (347 aa).

The segment at 1-119 (MTLDHQIINP…GLTSASCPSS (119 aa)) is necessary for transcriptional transactivation. The bHLH domain occupies 139 to 192 (QKKDNHNLIERRRRYNINYRIKELGTLIPKSNDPDMRWNKGTILKASVEYIKWL). A necessary for transcriptional transactivation region spans residues 271–347 (PSPELCDQAI…SFSSDDGDEL (77 aa)). Residues 319-347 (DPLLSATSPAVSKESSRRSSFSSDDGDEL) form a disordered region. Over residues 326–341 (SPAVSKESSRRSSFSS) the composition is skewed to low complexity.

It belongs to the MiT/TFE family. As to quaternary structure, homodimer. Forms heterodimers with TFE3. Forms heterodimers with MITF. Interacts with MITF. In terms of tissue distribution, expressed moderately in spleen, kidney, bone marrow, small intestine and leukocytes. Expressed weakly in testis, trachea and colon.

The protein resides in the nucleus. Functionally, transcriptional regulator that acts as a repressor or an activator. Acts as a transcriptional repressor on minimal promoter containing element F (that includes an E-box sequence). Binds to element F in an E-box sequence-specific manner. Acts as a transcriptional transactivator on the proximal promoter region of the tartrate-resistant acid phosphatase (TRAP) E-box containing promoter. Collaborates with MITF in target gene activation. Acts as a transcriptional repressor on minimal promoter containing mu E3 enhancer sequence. Binds to mu E3 DNA sequence of the immunoglobulin heavy-chain gene enhancer. Binds DNA in a homo- or heterodimeric form. The sequence is that of Transcription factor EC (TFEC) from Homo sapiens (Human).